Consider the following 57-residue polypeptide: MAVPFRRTSKTKKRLRRTHFKLQVPGMVECPNCGEMKLSHRVCKACGSYKGKDVKSN.

Belongs to the bacterial ribosomal protein bL32 family.

This is Large ribosomal subunit protein bL32 from Bacillus licheniformis (strain ATCC 14580 / DSM 13 / JCM 2505 / CCUG 7422 / NBRC 12200 / NCIMB 9375 / NCTC 10341 / NRRL NRS-1264 / Gibson 46).